A 319-amino-acid chain; its full sequence is Acetyl-coenzyme A carboxylase carboxyl transferase subunit alpha (319 aa).

The 262-residue stretch at 35 to 296 folds into the CoA carboxyltransferase C-terminal domain; it reads NIDEEVHRLR…KAQLLADLAD (262 aa).

It belongs to the AccA family. In terms of assembly, acetyl-CoA carboxylase is a heterohexamer composed of biotin carboxyl carrier protein (AccB), biotin carboxylase (AccC) and two subunits each of ACCase subunit alpha (AccA) and ACCase subunit beta (AccD).

It is found in the cytoplasm. The catalysed reaction is N(6)-carboxybiotinyl-L-lysyl-[protein] + acetyl-CoA = N(6)-biotinyl-L-lysyl-[protein] + malonyl-CoA. Its pathway is lipid metabolism; malonyl-CoA biosynthesis; malonyl-CoA from acetyl-CoA: step 1/1. In terms of biological role, component of the acetyl coenzyme A carboxylase (ACC) complex. First, biotin carboxylase catalyzes the carboxylation of biotin on its carrier protein (BCCP) and then the CO(2) group is transferred by the carboxyltransferase to acetyl-CoA to form malonyl-CoA. This is Acetyl-coenzyme A carboxylase carboxyl transferase subunit alpha from Shigella sonnei (strain Ss046).